Consider the following 790-residue polypeptide: Lon protease 2 (790 aa).

In terms of domain architecture, Lon N-terminal spans 18 to 210 (LRILPLRNMV…HVTFYMTRQL (193 aa)). Position 362-369 (362-369 (GPPGVGKT)) interacts with ATP. Residues 598 to 779 (SWGCGIATGL…SDVLQLALLP (182 aa)) form the Lon proteolytic domain. Active-site residues include serine 685 and lysine 728.

The protein belongs to the peptidase S16 family. As to quaternary structure, homohexamer. Organized in a ring with a central cavity.

The protein localises to the cytoplasm. The enzyme catalyses Hydrolysis of proteins in presence of ATP.. Its function is as follows. ATP-dependent serine protease that mediates the selective degradation of mutant and abnormal proteins as well as certain short-lived regulatory proteins. Required for cellular homeostasis and for survival from DNA damage and developmental changes induced by stress. Degrades polypeptides processively to yield small peptide fragments that are 5 to 10 amino acids long. Binds to DNA in a double-stranded, site-specific manner. The protein is Lon protease 2 of Syntrophobacter fumaroxidans (strain DSM 10017 / MPOB).